The primary structure comprises 488 residues: 2,3-bisphosphoglycerate-independent phosphoglycerate mutase (488 aa).

Ser10 serves as the catalytic Phosphoserine intermediate. Ser10 is a Mn(2+) binding site. Residues His69, 99–100, Arg135, Arg142, 215–218, and Lys290 each bind substrate; these read RD and RADR. Residues Asp359, His363, Asp400, His401, and His430 each coordinate Mn(2+).

Belongs to the BPG-independent phosphoglycerate mutase family. Monomer. Mn(2+) is required as a cofactor.

The protein localises to the cytoplasm. The enzyme catalyses (2R)-2-phosphoglycerate = (2R)-3-phosphoglycerate. It functions in the pathway carbohydrate degradation; glycolysis; pyruvate from D-glyceraldehyde 3-phosphate: step 3/5. Functionally, catalyzes the interconversion of 2-phosphoglycerate and 3-phosphoglycerate. In Prunus dulcis (Almond), this protein is 2,3-bisphosphoglycerate-independent phosphoglycerate mutase.